The sequence spans 391 residues: 5-amino-6-(D-ribitylamino)uracil--L-tyrosine 4-hydroxyphenyl transferase (391 aa).

The Radical SAM core domain occupies 55–302 (VTYVINRNIN…GAVARIYLGN (248 aa)). Residues Cys69, Cys73, and Cys76 each contribute to the [4Fe-4S] cluster site.

The protein belongs to the radical SAM superfamily. CofH family. Consists of two subunits, CofG and CofH. The cofactor is [4Fe-4S] cluster.

It carries out the reaction 5-amino-6-(D-ribitylamino)uracil + L-tyrosine + S-adenosyl-L-methionine = 5-amino-5-(4-hydroxybenzyl)-6-(D-ribitylimino)-5,6-dihydrouracil + 2-iminoacetate + 5'-deoxyadenosine + L-methionine + H(+). Its pathway is cofactor biosynthesis; coenzyme F0 biosynthesis. Its function is as follows. Catalyzes the radical-mediated synthesis of 5-amino-5-(4-hydroxybenzyl)-6-(D-ribitylimino)-5,6-dihydrouracil from 5-amino-6-(D-ribitylamino)uracil and L-tyrosine. This Nostoc sp. (strain PCC 7120 / SAG 25.82 / UTEX 2576) protein is 5-amino-6-(D-ribitylamino)uracil--L-tyrosine 4-hydroxyphenyl transferase.